The following is a 257-amino-acid chain: Ribosomal RNA small subunit methyltransferase J (257 aa).

Residues 107 to 108, 123 to 124, and aspartate 177 contribute to the S-adenosyl-L-methionine site; these read RD and ER.

This sequence belongs to the methyltransferase superfamily. RsmJ family.

It localises to the cytoplasm. The enzyme catalyses guanosine(1516) in 16S rRNA + S-adenosyl-L-methionine = N(2)-methylguanosine(1516) in 16S rRNA + S-adenosyl-L-homocysteine + H(+). Specifically methylates the guanosine in position 1516 of 16S rRNA. This chain is Ribosomal RNA small subunit methyltransferase J, found in Haemophilus influenzae (strain ATCC 51907 / DSM 11121 / KW20 / Rd).